The primary structure comprises 354 residues: Probable L-ascorbate-6-phosphate lactonase UlaG (354 aa).

Belongs to the UlaG family. A divalent metal cation serves as cofactor.

Its subcellular location is the cytoplasm. The enzyme catalyses L-ascorbate 6-phosphate + H2O = 3-dehydro-L-gulonate 6-phosphate. The protein operates within cofactor degradation; L-ascorbate degradation; D-xylulose 5-phosphate from L-ascorbate: step 1/4. Functionally, probably catalyzes the hydrolysis of L-ascorbate-6-P into 3-keto-L-gulonate-6-P. Is essential for L-ascorbate utilization under anaerobic conditions. The protein is Probable L-ascorbate-6-phosphate lactonase UlaG of Shigella flexneri.